The sequence spans 180 residues: Dephospho-CoA kinase (180 aa).

A DPCK domain is found at 2 to 180 (VIGVTGKIGT…VMKLVWEKRE (179 aa)). 10-15 (GTGKST) lines the ATP pocket.

This sequence belongs to the CoaE family.

The protein resides in the cytoplasm. It catalyses the reaction 3'-dephospho-CoA + ATP = ADP + CoA + H(+). The protein operates within cofactor biosynthesis; coenzyme A biosynthesis; CoA from (R)-pantothenate: step 5/5. Catalyzes the phosphorylation of the 3'-hydroxyl group of dephosphocoenzyme A to form coenzyme A. The chain is Dephospho-CoA kinase from Thermotoga maritima (strain ATCC 43589 / DSM 3109 / JCM 10099 / NBRC 100826 / MSB8).